Consider the following 166-residue polypeptide: Peptidyl-prolyl cis-trans isomerase-like 1 (166 aa).

The PPIase cyclophilin-type domain occupies 10–164 (QPPNVYLETS…DDVKIIKAYP (155 aa)). Residues 54–65 (HRIIKDFMIQGG), 70–71 (TG), 99–104 (AMANAG), 109–113 (GSQFF), Thr119, and Lys125 each bind cyclosporin A. Phosphoserine is present on Ser149.

The protein belongs to the cyclophilin-type PPIase family. PPIL1 subfamily. As to quaternary structure, identified in the spliceosome C complex. Interacts with SNW1/SKIP. Interacts with CDC40/PRP17; this interaction leads to CDC40 isomerization. Interacts with RBM22.

Its subcellular location is the nucleus. It carries out the reaction [protein]-peptidylproline (omega=180) = [protein]-peptidylproline (omega=0). With respect to regulation, inhibited by Cyclosporin A. In terms of biological role, involved in pre-mRNA splicing as component of the spliceosome. PPIases accelerate the folding of proteins. It catalyzes the cis-trans isomerization of proline imidic peptide bonds in oligopeptides. Catalyzes prolyl peptide bond isomerization in CDC40/PRP17. Plays an important role in embryonic brain development; this function is independent of its isomerase activity. The chain is Peptidyl-prolyl cis-trans isomerase-like 1 (PPIL1) from Bos taurus (Bovine).